A 335-amino-acid chain; its full sequence is Mycobacterial beta-ketoacyl-[acyl-carrier-protein] synthase III (335 aa).

Active-site residues include cysteine 122 and histidine 258. The interval 259 to 263 (QANSR) is ACP-binding. Residue asparagine 289 is part of the active site.

This sequence belongs to the thiolase-like superfamily. FabH family. Homodimer.

It is found in the cytoplasm. The catalysed reaction is malonyl-[ACP] + dodecanoyl-CoA + H(+) = 3-oxotetradecanoyl-[ACP] + CO2 + CoA. The protein operates within lipid metabolism; fatty acid biosynthesis. It functions in the pathway lipid metabolism; mycolic acid biosynthesis. In terms of biological role, catalyzes the condensation reaction of fatty acid synthesis by the addition to an acyl acceptor of two carbons from malonyl-ACP. Catalyzes the first condensation reaction which initiates fatty acid synthesis and may therefore play a role in governing the total rate of fatty acid production. Possesses both acetoacetyl-ACP synthase and acetyl transacylase activities. Its substrate specificity determines the biosynthesis of branched-chain and/or straight-chain of fatty acids. The sequence is that of Mycobacterial beta-ketoacyl-[acyl-carrier-protein] synthase III from Mycobacterium marinum (strain ATCC BAA-535 / M).